The following is a 692-amino-acid chain: Serine/threonine-protein kinase Nek8 (692 aa).

One can recognise a Protein kinase domain in the interval 4–258 (YERIRVVGRG…LSHIMAQPLC (255 aa)). ATP-binding positions include 10–18 (VGRGAFGIV) and Lys-33. The active-site Proton acceptor is the Asp-128. At Thr-162 the chain carries Phosphothreonine; by autocatalysis. The segment at 277–301 (AEKSVAPSNTGSRTTSVRCRGIPRG) is disordered. The segment covering 282 to 293 (APSNTGSRTTSV) has biased composition (polar residues). 5 RCC1 repeats span residues 312-350 (SSVYAWGGGLGTPLRLPMLNTEVVQVAAGRTQKAGVTRS), 410-461 (GIIM…LSTE), 462-513 (RELF…LTVP), 580-631 (GDCY…IGAE), and 632-684 (SEVY…AVRS).

Belongs to the protein kinase superfamily. NEK Ser/Thr protein kinase family. NIMA subfamily. As to quaternary structure, interacts with PKD2; may regulate PKD2 targeting to the cilium. Interacts with ANKS6. Component of a complex containing at least ANKS6, INVS, NEK8 and NPHP3. ANKS6 may organize complex assembly by linking INVS and NPHP3 to NEK8 and INVS may target the complex to the proximal ciliary axoneme. Interacts with ANKS3. It depends on Mg(2+) as a cofactor. In terms of tissue distribution, highest expression in thyroid, adrenal gland and skin. Low levels in spleen, colon and uterus. Overexpressed in breast tumors, with highest expression in infiltrating ductal carcinomas and moderate levels in mucinous adenocarcinoma.

The protein localises to the cytoplasm. It localises to the cytoskeleton. It is found in the cell projection. Its subcellular location is the cilium. The protein resides in the microtubule organizing center. The protein localises to the centrosome. It localises to the cilium axoneme. It catalyses the reaction L-seryl-[protein] + ATP = O-phospho-L-seryl-[protein] + ADP + H(+). It carries out the reaction L-threonyl-[protein] + ATP = O-phospho-L-threonyl-[protein] + ADP + H(+). Required for renal tubular integrity. May regulate local cytoskeletal structure in kidney tubule epithelial cells. May regulate ciliary biogenesis through targeting of proteins to the cilia. Plays a role in organogenesis, and is involved in the regulation of the Hippo signaling pathway. The sequence is that of Serine/threonine-protein kinase Nek8 (NEK8) from Homo sapiens (Human).